A 243-amino-acid polypeptide reads, in one-letter code: UMP-CMP kinase 1 (243 aa).

Residue 29–34 (GSGKGT) coordinates ATP. Residues 49–78 (SAGDLLREEAKYDTEQGTMIKNLMNEGKLV) are NMP. Residues arginine 55, 76 to 78 (KLV), and 103 to 106 (GFPR) contribute to the a ribonucleoside 5'-phosphate site. CMP is bound at residue asparagine 110. The segment at 141-149 (NRNQGRDDD) is LID. Residue arginine 142 participates in ATP binding. Positions 146 and 157 each coordinate a ribonucleoside 5'-phosphate. ATP is bound at residue arginine 185.

This sequence belongs to the adenylate kinase family. UMP-CMP kinase subfamily. Monomer. Mg(2+) serves as cofactor.

It is found in the cytoplasm. Its subcellular location is the nucleus. The enzyme catalyses UMP + ATP = UDP + ADP. It carries out the reaction CMP + ATP = CDP + ADP. The catalysed reaction is dCMP + ATP = dCDP + ADP. Functionally, catalyzes the phosphorylation of pyrimidine nucleoside monophosphates at the expense of ATP. Plays an important role in de novo pyrimidine nucleotide biosynthesis. Has preference for UMP and CMP as phosphate acceptors. In Oryza sativa subsp. japonica (Rice), this protein is UMP-CMP kinase 1.